Reading from the N-terminus, the 686-residue chain is MSFPRGSQTQKIKHPIGTRKGPLEVPPPTEKDWPKDDEQDHVLVDPDEELDSLPQPYRMINKLVNLLFDQSWEIIEERNALREAESSQIQPTVYPPLGEIQLNKMPNCMAVSQDYVFIGGAKGFSIYNLYSAKQIYAWEKLKVDVTSIWATDLGNEILIAPVDEMGIIRLFYFYKEGLYLVKAINEVDDTSKQTTCIKMEISQGGDFAAFLLQGAGDIWLDVYKLPKETWLKKLEHPQLTSNPKKKVRQPQLNSLGPISADPLEMDANVSFKGDIKLSLPVYIMKIKPPKPVTGTTFKSPLEVFAKIKDCYGLGSGQNHFIKDSQWEQQAEIFNASYKKYLDREWEEEPLSTATFYFLLPSCLFAMPPEVKGPSGMACVLGIHWTRSHNFFLYSLNRTLKDKADPEGVWPCAAPIAVSQLSCSSSYLVLACEDGVLTLWDLAKGFPLGVAALPQGCFCQSIHFLKYFSVHKGQNMYPEGQVKSQMKCVVLCTDASLHLVEASGTQGPTISVLVERPVKHLDKTICAVAPVPALPGMVLIFSKNGSVCLMDVAKREIICAFAPPGAFPLEVPWKPVFAVSPDHPCFLLRGDYSHETASTDDAGIQYSVFYFNFEACPLLENISKNCTIPQRDLDNMAFPQALPLEKRCERFLQKSYRKLEKNPEKEEEHWARLQRYSLSLQRENFKK.

Residues 1–10 (MSFPRGSQTQ) are compositionally biased toward polar residues. Residues 1–40 (MSFPRGSQTQKIKHPIGTRKGPLEVPPPTEKDWPKDDEQD) form a disordered region. The span at 29–40 (TEKDWPKDDEQD) shows a compositional bias: basic and acidic residues. The stretch at 410–449 (PCAAPIAVSQLSCSSSYLVLACEDGVLTLWDLAKGFPLGV) is one WD repeat.

In Homo sapiens (Human), this protein is WD repeat-containing protein 93 (WDR93).